The chain runs to 418 residues: Putative FBD-associated F-box protein At5g56560 (418 aa).

An F-box domain is found at 4–60; the sequence is QTRLSDLPDELLLKILSALPMFKVTLATRLISRRWKGPWKLVPDVTFDDDDIPFKSF. The FBD domain maps to 340 to 390; sequence LWEEPAVVAKCLSEHLEIFEWRQYEGTEQERNVAGYILANATCLKMATFST.

The sequence is that of Putative FBD-associated F-box protein At5g56560 from Arabidopsis thaliana (Mouse-ear cress).